The chain runs to 244 residues: MGKRILVQRRGRGGSQFRSPSWKRDGPVRYPPNISGRGIVVEILHEPGLNAPVAKIRMENGVEFFNYAAEGLYVGQVIQVGPDAPPAVGNVLPLGKIPEGTMVFNVEKRFGDGGKFARSGGTYALVIGQRPEENKTIVRLPSGRVIEVDARGRATIGIVAGGGRVEKPFVKAGKKYHRARAKSWKYPTVRGKAMSPYAHPHGGGSHQKGGTPVPKTAPPGQKVGFIGSRCTGRGCVRARAQQKQ.

Basic residues predominate over residues 1–12; sequence MGKRILVQRRGR. Disordered regions lie at residues 1-26 and 193-225; these read MGKR…KRDG and AMSP…KVGF.

This sequence belongs to the universal ribosomal protein uL2 family. In terms of assembly, part of the 50S ribosomal subunit. Forms a bridge to the 30S subunit in the 70S ribosome.

Its function is as follows. One of the primary rRNA binding proteins. Required for association of the 30S and 50S subunits to form the 70S ribosome, for tRNA binding and peptide bond formation. It has been suggested to have peptidyltransferase activity; this is somewhat controversial. Makes several contacts with the 16S rRNA in the 70S ribosome. In Pyrobaculum calidifontis (strain DSM 21063 / JCM 11548 / VA1), this protein is Large ribosomal subunit protein uL2.